Here is a 50-residue protein sequence, read N- to C-terminus: uncharacterized protein (50 aa).

This is an uncharacterized protein from Dictyostelium discoideum (Social amoeba).